The primary structure comprises 82 residues: Fibroblast growth factor 8 (82 aa).

The N-linked (GlcNAc...) asparagine glycan is linked to N68.

This sequence belongs to the heparin-binding growth factors family. As to quaternary structure, monomer. Homodimer. Interacts with FGFR1, FGFR2, FGFR3 and FGFR4. Affinity between fibroblast growth factors (FGFs) and their receptors is increased by heparan sulfate glycosaminoglycans that function as coreceptors.

Its subcellular location is the secreted. Its function is as follows. Plays an important role in the regulation of embryonic development, cell proliferation, cell differentiation and cell migration. Required for normal brain, eye, ear and limb development during embryogenesis. Required for normal development of the gonadotropin-releasing hormone (GnRH) neuronal system. Plays a role in neurite outgrowth in hippocampal cells. This is Fibroblast growth factor 8 (FGF8) from Canis lupus familiaris (Dog).